A 285-amino-acid polypeptide reads, in one-letter code: HTH-type transcriptional regulator HexR (285 aa).

The HTH rpiR-type domain maps to K2 to G78. Residues I38–R57 constitute a DNA-binding region (H-T-H motif). Residues A122–V261 form the SIS domain.

In terms of biological role, involved in regulation of glucose metabolism. Transcriptional repressor of the gap-1 gene and of the edd-glk-gltR-2 and zwf-pgl-eda operons. Acts by binding directly to an inverted pseudopalindromic sequence in the promoter region. In Pseudomonas aeruginosa (strain ATCC 15692 / DSM 22644 / CIP 104116 / JCM 14847 / LMG 12228 / 1C / PRS 101 / PAO1), this protein is HTH-type transcriptional regulator HexR.